A 115-amino-acid chain; its full sequence is Aspartate 1-decarboxylase (115 aa).

The active-site Schiff-base intermediate with substrate; via pyruvic acid is Ser-25. Ser-25 is subject to Pyruvic acid (Ser). Thr-57 lines the substrate pocket. Residue Tyr-58 is the Proton donor of the active site. 71–73 (GAA) contacts substrate.

This sequence belongs to the PanD family. As to quaternary structure, heterooctamer of four alpha and four beta subunits. It depends on pyruvate as a cofactor. Post-translationally, is synthesized initially as an inactive proenzyme, which is activated by self-cleavage at a specific serine bond to produce a beta-subunit with a hydroxyl group at its C-terminus and an alpha-subunit with a pyruvoyl group at its N-terminus.

It localises to the cytoplasm. The enzyme catalyses L-aspartate + H(+) = beta-alanine + CO2. Its pathway is cofactor biosynthesis; (R)-pantothenate biosynthesis; beta-alanine from L-aspartate: step 1/1. Its function is as follows. Catalyzes the pyruvoyl-dependent decarboxylation of aspartate to produce beta-alanine. This Campylobacter curvus (strain 525.92) protein is Aspartate 1-decarboxylase.